The following is a 168-amino-acid chain: G/U mismatch-specific DNA glycosylase (168 aa).

This sequence belongs to the uracil-DNA glycosylase (UDG) superfamily. TDG/mug family. As to quaternary structure, binds DNA as a monomer.

The protein resides in the cytoplasm. It carries out the reaction Specifically hydrolyzes mismatched double-stranded DNA and polynucleotides, releasing free uracil.. Excises ethenocytosine and uracil, which can arise by alkylation or deamination of cytosine, respectively, from the corresponding mispairs with guanine in ds-DNA. It is capable of hydrolyzing the carbon-nitrogen bond between the sugar-phosphate backbone of the DNA and the mispaired base. The complementary strand guanine functions in substrate recognition. Required for DNA damage lesion repair in stationary-phase cells. In Salmonella agona (strain SL483), this protein is G/U mismatch-specific DNA glycosylase.